The following is a 534-amino-acid chain: Peptide chain release factor 3 (534 aa).

The 270-residue stretch at 9-278 folds into the tr-type G domain; that stretch reads ARRRTFAIIS…FFVEHAPPPQ (270 aa). GTP is bound by residues 18–25, 86–90, and 140–143; these read SHPDAGKT, DTPGH, and NKLD.

The protein belongs to the TRAFAC class translation factor GTPase superfamily. Classic translation factor GTPase family. PrfC subfamily.

The protein localises to the cytoplasm. Its function is as follows. Increases the formation of ribosomal termination complexes and stimulates activities of RF-1 and RF-2. It binds guanine nucleotides and has strong preference for UGA stop codons. It may interact directly with the ribosome. The stimulation of RF-1 and RF-2 is significantly reduced by GTP and GDP, but not by GMP. The polypeptide is Peptide chain release factor 3 (Xanthomonas axonopodis pv. citri (strain 306)).